A 107-amino-acid chain; its full sequence is Large ribosomal subunit protein uL24 (107 aa).

This sequence belongs to the universal ribosomal protein uL24 family. Part of the 50S ribosomal subunit.

In terms of biological role, one of two assembly initiator proteins, it binds directly to the 5'-end of the 23S rRNA, where it nucleates assembly of the 50S subunit. One of the proteins that surrounds the polypeptide exit tunnel on the outside of the subunit. This chain is Large ribosomal subunit protein uL24, found in Nitratidesulfovibrio vulgaris (strain ATCC 29579 / DSM 644 / CCUG 34227 / NCIMB 8303 / VKM B-1760 / Hildenborough) (Desulfovibrio vulgaris).